The primary structure comprises 320 residues: Citrate synthase (320 aa).

Residues His-249 and Asp-307 contribute to the active site.

The protein belongs to the citrate synthase family.

It carries out the reaction oxaloacetate + acetyl-CoA + H2O = citrate + CoA + H(+). Its pathway is carbohydrate metabolism; tricarboxylic acid cycle; isocitrate from oxaloacetate: step 1/2. The protein is Citrate synthase (gltA) of Bartonella doshiae.